A 160-amino-acid polypeptide reads, in one-letter code: uncharacterized protein (160 aa).

4 consecutive transmembrane segments (helical) span residues 7-27, 48-68, 95-115, and 121-141; these read IFLK…CIFL, LVFI…YQAF, AVTI…MAEI, and IIVI…FAAV.

Its subcellular location is the cell membrane. This is an uncharacterized protein from Bacillus subtilis (strain 168).